The sequence spans 520 residues: Cytochrome P450 72A68 (520 aa).

Residues 11-31 (IILITVTFGLVYAWRVLNWMW) form a helical membrane-spanning segment. Residue Cys-466 coordinates heme.

It belongs to the cytochrome P450 family. It depends on heme as a cofactor.

It localises to the membrane. The catalysed reaction is oleanolate + 3 reduced [NADPH--hemoprotein reductase] + 3 O2 = gypsogenate + 3 oxidized [NADPH--hemoprotein reductase] + 4 H2O + 4 H(+). Functionally, catalyzes the carboxylation of oleanolic acid at the C-23 position to form gypsogenic acid. Involved in the hemolytic saponin biosynthetic pathway. This Medicago truncatula (Barrel medic) protein is Cytochrome P450 72A68.